A 152-amino-acid polypeptide reads, in one-letter code: Endoribonuclease YbeY (152 aa).

Zn(2+) contacts are provided by His-118, His-122, and His-128.

This sequence belongs to the endoribonuclease YbeY family. Zn(2+) is required as a cofactor.

It localises to the cytoplasm. Single strand-specific metallo-endoribonuclease involved in late-stage 70S ribosome quality control and in maturation of the 3' terminus of the 16S rRNA. This is Endoribonuclease YbeY from Lacticaseibacillus casei (strain BL23) (Lactobacillus casei).